Consider the following 89-residue polypeptide: MYNTTPLNFAINQENNEEVIKYLLANGANPRLALVDIIEAGNNNALNLLMKVAPSITVDEVFPQVMAMGMRRFFQAVQNKDLSAIKDFI.

An ANK repeat occupies 2-32; sequence YNTTPLNFAINQENNEEVIKYLLANGANPRL.

The chain is Putative ankyrin repeat protein RF_1157 from Rickettsia felis (strain ATCC VR-1525 / URRWXCal2) (Rickettsia azadi).